A 236-amino-acid polypeptide reads, in one-letter code: Small ribosomal subunit protein uS5 (236 aa).

Residues 61 to 124 (ENQEILDIAL…NYAKLNIIEI (64 aa)) enclose the S5 DRBM domain.

The protein belongs to the universal ribosomal protein uS5 family. In terms of assembly, part of the 30S ribosomal subunit. Contacts protein S4.

With S4 and S12 plays an important role in translational accuracy. The sequence is that of Small ribosomal subunit protein uS5 from Pyrococcus abyssi (strain GE5 / Orsay).